Consider the following 2131-residue polypeptide: Protein Ycf2 (2131 aa).

Position 1484–1491 (1484–1491) interacts with ATP; sequence GSIGTGRS.

This sequence belongs to the Ycf2 family.

It localises to the plastid. It is found in the chloroplast stroma. Its function is as follows. Probable ATPase of unknown function. Its presence in a non-photosynthetic plant (Epifagus virginiana) and experiments in tobacco indicate that it has an essential function which is probably not related to photosynthesis. This chain is Protein Ycf2 (ycf2-A), found in Spinacia oleracea (Spinach).